The chain runs to 155 residues: uncharacterized protein (155 aa).

4 helical membrane-spanning segments follow: residues 25-45 (LPMG…FGWT), 50-70 (IFWF…IMTS), 91-111 (GVKI…ESLF), and 118-138 (WGCT…PILF).

This sequence belongs to the major facilitator superfamily. CAR1 family.

It localises to the membrane. This is an uncharacterized protein from Schizosaccharomyces pombe (strain 972 / ATCC 24843) (Fission yeast).